A 1336-amino-acid polypeptide reads, in one-letter code: Lysine-specific demethylase 2B (1336 aa).

The segment at 1-25 is disordered; the sequence is MAGPQMGGSAEDHPPRKRHAAEKQK. Residues 15-25 are compositionally biased toward basic residues; sequence PRKRHAAEKQK. Position 57 is a phosphoserine (serine 57). In terms of domain architecture, JmjC spans 178 to 346; the sequence is FSHTKLEHLV…MQLRIYEIED (169 aa). Threonine 239 provides a ligand contact to substrate. Residues histidine 242 and aspartate 244 each contribute to the Fe cation site. Lysine 259 is a binding site for substrate. Histidine 314 contacts Fe cation. Residues 410–430 are compositionally biased toward acidic residues; the sequence is MEEEACDQQPQEEEEKDEEGE. The interval 410–465 is disordered; sequence MEEEACDQQPQEEEEKDEEGEGRDRAPKPPTDGSTSPTSTPSEDQEALGKKPKAPA. A compositionally biased stretch (low complexity) spans 440 to 451; it reads TDGSTSPTSTPS. Phosphoserine occurs at positions 474 and 477. Position 493 is a phosphothreonine (threonine 493). Serine 497 bears the Phosphoserine mark. A CXXC-type zinc finger spans residues 606–652; that stretch reads ARRRRTRCRKCEACLRTECGECHFCKDMKKFGGPGRMKQSCIMRQCI. Cysteine 613, cysteine 616, cysteine 619, cysteine 624, cysteine 627, cysteine 630, cysteine 646, cysteine 651, cysteine 662, cysteine 665, cysteine 688, cysteine 691, histidine 696, cysteine 699, cysteine 719, and cysteine 722 together coordinate Zn(2+). The segment at 659 to 725 adopts a PHD-type zinc-finger fold; the sequence is TAVCLVCGEA…CWECPKCNHA (67 aa). Disordered stretches follow at residues 727-843 and 855-1034; these read KTGK…SLSP and QLKP…SPPK. A compositionally biased stretch (basic and acidic residues) spans 749 to 799; sequence KEQKMNRDNKEGQEPAKRRSECEEAPRRRSDEHSKKVPPDGLLRRKSDDVH. Residues 819 to 843 are compositionally biased toward low complexity; that stretch reads SSLQTSPGSSSHLSPRPPLGSSLSP. Residues lysine 857 and lysine 890 each participate in a glycyl lysine isopeptide (Lys-Gly) (interchain with G-Cter in SUMO2) cross-link. Basic and acidic residues predominate over residues 902–911; the sequence is PKTRESDHSR. Basic residues predominate over residues 932–941; it reads KVKMRRKRRL. The span at 942–960 shows a compositional bias: basic and acidic residues; it reads PNKELSRELSKELNHEIQR. Residues 943–971 adopt a coiled-coil conformation; the sequence is NKELSRELSKELNHEIQRTENSLANENQQ. Serine 951 is subject to Phosphoserine. A compositionally biased stretch (polar residues) spans 961–971; that stretch reads TENSLANENQQ. Phosphoserine is present on residues serine 975, serine 979, serine 1018, and serine 1031. The segment covering 1014–1024 has biased composition (low complexity); that stretch reads PSLRSPPRVIS. Residues 1059-1105 enclose the F-box domain; that stretch reads DGAAHVMHREVWMAVFSYLSHQDLCVCMRVCRTWNRWCCDKRLWTRI. LRR repeat units lie at residues 1093-1120, 1133-1154, 1156-1182, 1222-1247, 1248-1277, 1278-1302, and 1303-1336; these read NRWC…MLSG, WTNI…LRDL, LSGC…DVQW, GLDI…HLSY, CNHV…NLSD, CNKV…DLRY, and CKQV…QKLS.

This sequence belongs to the JHDM1 histone demethylase family. As to quaternary structure, interacts with SKP1, forming heterodimers. The heterodimeric KDM2B-SKP1 complex interacts with the PCGF1-BCORL1 heterodimeric complex to form a homotetrameric polycomb repression complex 1 (PRC1.1). Directly interacts with CUL1. The SKP1-KDM2B complex interacts with UBB. The cofactor is Fe(2+).

It is found in the nucleus. The protein resides in the nucleolus. The protein localises to the chromosome. The catalysed reaction is N(6),N(6)-dimethyl-L-lysyl(36)-[histone H3] + 2 2-oxoglutarate + 2 O2 = L-lysyl(36)-[histone H3] + 2 formaldehyde + 2 succinate + 2 CO2. Its activity is regulated as follows. Histone demethylase activity is inhibited by fumarate. Functionally, histone demethylase that demethylates 'Lys-4' and 'Lys-36' of histone H3, thereby playing a central role in histone code. Preferentially demethylates trimethylated H3 'Lys-4' and dimethylated H3 'Lys-36' residue while it has weak or no activity for mono- and tri-methylated H3 'Lys-36'. Preferentially binds the transcribed region of ribosomal RNA and represses the transcription of ribosomal RNA genes which inhibits cell growth and proliferation. May also serve as a substrate-recognition component of the SCF (SKP1-CUL1-F-box protein)-type E3 ubiquitin ligase complex. The polypeptide is Lysine-specific demethylase 2B (KDM2B) (Homo sapiens (Human)).